The following is a 441-amino-acid chain: UDP-N-acetylglucosamine 1-carboxyvinyltransferase 1 (441 aa).

Phosphoenolpyruvate is bound at residue 42–43 (KN). Arg-117 contributes to the UDP-N-acetyl-alpha-D-glucosamine binding site. Catalysis depends on Cys-141, which acts as the Proton donor. Residue Cys-141 is modified to 2-(S-cysteinyl)pyruvic acid O-phosphothioketal. UDP-N-acetyl-alpha-D-glucosamine is bound by residues Asp-330 and Ile-352.

It belongs to the EPSP synthase family. MurA subfamily.

Its subcellular location is the cytoplasm. The enzyme catalyses phosphoenolpyruvate + UDP-N-acetyl-alpha-D-glucosamine = UDP-N-acetyl-3-O-(1-carboxyvinyl)-alpha-D-glucosamine + phosphate. The protein operates within cell wall biogenesis; peptidoglycan biosynthesis. Cell wall formation. Adds enolpyruvyl to UDP-N-acetylglucosamine. The protein is UDP-N-acetylglucosamine 1-carboxyvinyltransferase 1 of Symbiobacterium thermophilum (strain DSM 24528 / JCM 14929 / IAM 14863 / T).